The chain runs to 659 residues: MPSGSSAALALAAAPAPLPQPPPPPPPPPPPLPPPSGGPELEGDGLLLRERLAALGLDDPSPAEPGAPALRAPAAAAQGQARRAAELSPEERAPPGRPGAPEAAELELEEDEEEGEEAELDGDLLEEEELEEAEEEDRSSLLLLSPPAATASQTQQIPGGSLGSVLLPAARFDAREAAAAAAAAGVLYGGDDAQGMMAAMLSHAYGPGGCGAAAAALNGEQAALLRRKSVNTTECVPVPSSEHVAEIVGRQGCKIKALRAKTNTYIKTPVRGEEPIFVVTGRKEDVAMAKREILSAAEHFSMIRASRNKNGPALGGLSCSPNLPGQTTVQVRVPYRVVGLVVGPKGATIKRIQQQTHTYIVTPSRDKEPVFEVTGMPENVDRAREEIEMHIAMRTGNYIELNEENDFHYNGTDVSFEGGTLGSAWLSSNPVPPSRARMISNYRNDSSSSLGSGSTDSYFGSNRLADFSPTSPFSTGNFWFGDTLPSVGSEDLAVDSPAFDSLPTSAQTIWTPFEPVNPLSGFGSDPSGNMKTQRRGSQPSTPRLSPTFPESIEHPLARRVRSDPPSTGNHVGLPIYIPAFSNGTNSYSSSNGGSTSSSPPESRRKHDCVICFENEVIAALVPCGHNLFCMECANKICEKRTPSCPVCQTAVTQAIQIHS.

Positions 1–15 (MPSGSSAALALAAAP) are enriched in low complexity. Residues 1–140 (MPSGSSAALA…EEAEEEDRSS (140 aa)) form a disordered region. Pro residues predominate over residues 16-37 (APLPQPPPPPPPPPPPLPPPSG). A compositionally biased stretch (low complexity) spans 64 to 82 (EPGAPALRAPAAAAQGQAR). Residues 83-94 (RAAELSPEERAP) show a composition bias toward basic and acidic residues. Phosphoserine is present on Ser-88. The span at 104-137 (AELELEEDEEEGEEAELDGDLLEEEELEEAEEED) shows a compositional bias: acidic residues. KH domains are found at residues 232-293 (TTEC…KREI) and 326-387 (QTTV…REEI). The interval 513 to 569 (FEPVNPLSGFGSDPSGNMKTQRRGSQPSTPRLSPTFPESIEHPLARRVRSDPPSTGN) is disordered. Residues 526-544 (PSGNMKTQRRGSQPSTPRL) are compositionally biased toward polar residues. 2 positions are modified to phosphoserine: Ser-537 and Ser-545. The span at 551–562 (SIEHPLARRVRS) shows a compositional bias: basic and acidic residues. Residues 608–648 (CVICFENEVIAALVPCGHNLFCMECANKICEKRTPSCPVCQ) form an RING-type zinc finger.

As to quaternary structure, interacts with USP7, which antagonizes the ability to degrade mRNA. Highest levels found in fetal brain and testis. Also expressed in thymus, salivary gland and uterus. Highly expressed in cells of the innate immune system, in particular activated NK cells. Week expression in the intestine.

It localises to the cytoplasm. The protein localises to the nucleus. It carries out the reaction S-ubiquitinyl-[E2 ubiquitin-conjugating enzyme]-L-cysteine + [acceptor protein]-L-lysine = [E2 ubiquitin-conjugating enzyme]-L-cysteine + N(6)-ubiquitinyl-[acceptor protein]-L-lysine.. Functionally, E3 ubiquitin ligase responsible for the post-transcriptional regulation of common HLA-A allotypes. Binds to the 3' UTR of HLA-A2 mRNA, and regulates its levels by promoting mRNA decay. RNA binding is sufficient to prevent translation, but ubiquitin ligase activity is required for mRNA degradation. In Homo sapiens (Human), this protein is RNA-binding E3 ubiquitin-protein ligase MEX3C (MEX3C).